The following is a 258-amino-acid chain: Aquaporin PIP1-2 (258 aa).

A disordered region spans residues 1–37; that stretch reads MEGKEEDVRLGANKFTERQPIGTAAQSQDKDYKEPPP. Residues 1–55 are Cytoplasmic-facing; sequence MEGKEEDVRLGANKFTERQPIGTAAQSQDKDYKEPPPAPLFEPGELSSWSFYRAG. Residues 56 to 76 form a helical membrane-spanning segment; the sequence is IAEFVATFLFLYITILTVMGV. Over 77–89 the chain is Extracellular; sequence VKSSTKCSTVGIQ. Residues 90 to 110 form a helical membrane-spanning segment; sequence GIAWAFGGMIFALVYCTAGIS. Residues 111–133 are Cytoplasmic-facing; that stretch reads GGHINPAVTFGLFLARKLSLTRA. Positions 115–117 match the NPA 1 motif; it reads NPA. A helical transmembrane segment spans residues 134–154; the sequence is LFYMVMQCLGAICGAGVVKGF. At 155-175 the chain is on the extracellular side; sequence QKGLYENNGGGANVVAPGYTK. Residues 176–196 form a helical membrane-spanning segment; it reads GDGLGAEIVGTFILVYTVFSA. The Cytoplasmic portion of the chain corresponds to 197–209; it reads TDAKRSARDSHVP. The chain crosses the membrane as a helical span at residues 210–230; sequence ILAPLPIGFAVFLVHLATIPI. The Extracellular segment spans residues 231-258; it reads TGTGINPARSLGAAIIYNKGHAWDDHWI. The short motif at 236-238 is the NPA 2 element; the sequence is NPA.

It belongs to the MIP/aquaporin (TC 1.A.8) family. PIP (TC 1.A.8.11) subfamily. As to expression, barely detectable in roots, leaves and fruits.

The protein resides in the cell membrane. Its function is as follows. Water channel required to facilitate the transport of water across cell membrane; mercury-insensitive. Contributes to the tolerance to multiple abiotic stresses including salt (NaCl), cold and water deprivation, by modulating cytosolic K(+)/Na(+) ratio, maintaining osmotic balance, and reducing membrane injury (e.g. oxidative injury). The polypeptide is Aquaporin PIP1-2 (Musa acuminata (Banana)).